The chain runs to 47 residues: Lysis protein for colicin E7 (47 aa).

The signal sequence occupies residues 1-19 (MKKITGIILLLLAAIILAA). Cysteine 20 is lipidated: N-palmitoyl cysteine. The S-diacylglycerol cysteine moiety is linked to residue cysteine 20.

Its subcellular location is the cell outer membrane. Functionally, lysis proteins are required for both colicin release and partial cell lysis. The chain is Lysis protein for colicin E7 (lys) from Escherichia coli.